We begin with the raw amino-acid sequence, 293 residues long: Protease HtpX (293 aa).

A run of 2 helical transmembrane segments spans residues 4-24 (IALF…VLSL) and 34-54 (GLMI…LLMS). Zn(2+) is bound at residue His139. Residue Glu140 is part of the active site. His143 contributes to the Zn(2+) binding site. The next 2 helical transmembrane spans lie at 158 to 178 (IVNT…SGFL) and 193 to 213 (LVYF…ASII). Glu222 provides a ligand contact to Zn(2+).

It belongs to the peptidase M48B family. The cofactor is Zn(2+).

It is found in the cell inner membrane. The chain is Protease HtpX from Pectobacterium carotovorum subsp. carotovorum (strain PC1).